We begin with the raw amino-acid sequence, 181 residues long: Large ribosomal subunit protein uL5c (181 aa).

This sequence belongs to the universal ribosomal protein uL5 family. As to quaternary structure, part of the 50S ribosomal subunit; contacts the 5S rRNA.

It localises to the plastid. Its subcellular location is the chloroplast. Its function is as follows. Binds 5S rRNA, forms part of the central protuberance of the 50S subunit. This is Large ribosomal subunit protein uL5c (rpl5) from Pyropia yezoensis (Susabi-nori).